The sequence spans 758 residues: 52 kDa repressor of the inhibitor of the protein kinase (758 aa).

The THAP-type zinc-finger motif lies at 1–86 (MPNFCAAPNC…LRDNAIPTIF (86 aa)). The segment at 116-141 (QKKIEETSEQEQETNTNAQNPSAEAV) is disordered. Ser-563 bears the Phosphoserine mark.

In terms of assembly, interacts with DNAJC3, probably sequestring it.

Its function is as follows. Upstream regulator of interferon-induced serine/threonine protein kinase R (PKR). May block the PKR-inhibitory function of DNAJC3, resulting in restoration of kinase activity and suppression of cell growth. The polypeptide is 52 kDa repressor of the inhibitor of the protein kinase (Mus musculus (Mouse)).